The sequence spans 135 residues: Basic phospholipase A2 6 (135 aa).

Intrachain disulfides connect Cys28–Cys87, Cys42–Cys134, Cys44–Cys60, Cys59–Cys115, Cys66–Cys108, Cys76–Cys101, and Cys94–Cys106. Residues Tyr43, Gly45, and Gly47 each coordinate Ca(2+). His63 is a catalytic residue. Asp64 serves as a coordination point for Ca(2+). Asp109 is an active-site residue.

The protein belongs to the phospholipase A2 family. Group I subfamily. D49 sub-subfamily. Ca(2+) serves as cofactor. Expressed by the venom gland.

The protein localises to the secreted. The catalysed reaction is a 1,2-diacyl-sn-glycero-3-phosphocholine + H2O = a 1-acyl-sn-glycero-3-phosphocholine + a fatty acid + H(+). Functionally, snake venom phospholipase A2 (PLA2) that inhibits neuromuscular transmission by blocking acetylcholine release from the nerve termini. PLA2 catalyzes the calcium-dependent hydrolysis of the 2-acyl groups in 3-sn-phosphoglycerides. Very weakly suppress the acetylcholine (ACh)-evoked current mediated by alpha-7-similar nAChRs in L.stagnalis neurons. This Bungarus fasciatus (Banded krait) protein is Basic phospholipase A2 6.